The chain runs to 275 residues: Putative Ig-like V-type domain-containing protein FPV055 (275 aa).

2 consecutive Ig-like V-type domains span residues 25–122 (KTFV…MNLG) and 140–239 (PRRS…KSLS).

This is Putative Ig-like V-type domain-containing protein FPV055 from Fowlpox virus (strain NVSL) (FPV).